The sequence spans 434 residues: Serine--tRNA ligase (434 aa).

237-239 (TAE) provides a ligand contact to L-serine. ATP is bound at residue 268 to 270 (RAE). Glutamate 291 contacts L-serine. 358–361 (EISS) provides a ligand contact to ATP. L-serine is bound at residue serine 393.

Belongs to the class-II aminoacyl-tRNA synthetase family. Type-1 seryl-tRNA synthetase subfamily. As to quaternary structure, homodimer. The tRNA molecule binds across the dimer.

The protein resides in the cytoplasm. The catalysed reaction is tRNA(Ser) + L-serine + ATP = L-seryl-tRNA(Ser) + AMP + diphosphate + H(+). It catalyses the reaction tRNA(Sec) + L-serine + ATP = L-seryl-tRNA(Sec) + AMP + diphosphate + H(+). Its pathway is aminoacyl-tRNA biosynthesis; selenocysteinyl-tRNA(Sec) biosynthesis; L-seryl-tRNA(Sec) from L-serine and tRNA(Sec): step 1/1. Its function is as follows. Catalyzes the attachment of serine to tRNA(Ser). Is also able to aminoacylate tRNA(Sec) with serine, to form the misacylated tRNA L-seryl-tRNA(Sec), which will be further converted into selenocysteinyl-tRNA(Sec). In Rhodopseudomonas palustris (strain BisB5), this protein is Serine--tRNA ligase.